We begin with the raw amino-acid sequence, 314 residues long: tRNA pseudouridine synthase B (314 aa).

Catalysis depends on Asp-47, which acts as the Nucleophile.

This sequence belongs to the pseudouridine synthase TruB family. Type 1 subfamily.

The enzyme catalyses uridine(55) in tRNA = pseudouridine(55) in tRNA. In terms of biological role, responsible for synthesis of pseudouridine from uracil-55 in the psi GC loop of transfer RNAs. This Vibrio parahaemolyticus serotype O3:K6 (strain RIMD 2210633) protein is tRNA pseudouridine synthase B.